Consider the following 1119-residue polypeptide: Protein translocase subunit SecA (1119 aa).

Residues Q177, 195–199, and D692 each bind ATP; that span reads GEGKT. Positions 1025–1081 are disordered; that stretch reads APSIHEARQTKSKEKVETRKEEIPNMDERAAQSRAAGNTQRQQPEVTETIVRDRPKI. Positions 1029–1055 are enriched in basic and acidic residues; it reads HEARQTKSKEKVETRKEEIPNMDERAA. A compositionally biased stretch (polar residues) spans 1059–1070; that stretch reads AAGNTQRQQPEV.

The protein belongs to the SecA family. Monomer and homodimer. Part of the essential Sec protein translocation apparatus which comprises SecA, SecYEG and auxiliary proteins SecDF. Other proteins may also be involved.

The protein resides in the cell inner membrane. Its subcellular location is the cytoplasm. The catalysed reaction is ATP + H2O + cellular proteinSide 1 = ADP + phosphate + cellular proteinSide 2.. Part of the Sec protein translocase complex. Interacts with the SecYEG preprotein conducting channel. Has a central role in coupling the hydrolysis of ATP to the transfer of proteins into and across the cell membrane, serving as an ATP-driven molecular motor driving the stepwise translocation of polypeptide chains across the membrane. This Christiangramia forsetii (strain DSM 17595 / CGMCC 1.15422 / KT0803) (Gramella forsetii) protein is Protein translocase subunit SecA.